The primary structure comprises 400 residues: Cytoplasmic polyadenylated homeobox-like protein 2 (400 aa).

The interval 1–29 (MSSQAFPAEEDHHNEERQTKKKRKTKHRH) is disordered. A compositionally biased stretch (basic and acidic residues) spans 9-18 (EEDHHNEERQ). Over residues 19-29 (TKKKRKTKHRH) the composition is skewed to basic residues. The homeobox DNA-binding region spans 24–83 (KTKHRHKFSEELLQELKEIFGENGYPDFTTRKTLANKFDCPVNVINNWFQNNRARLPPEE).

The protein resides in the nucleus. The chain is Cytoplasmic polyadenylated homeobox-like protein 2 from Homo sapiens (Human).